A 457-amino-acid polypeptide reads, in one-letter code: Bifunctional protein GlmU (457 aa).

The interval 1 to 230 (MSKRYAVVLA…FEESLGVNDR (230 aa)) is pyrophosphorylase. UDP-N-acetyl-alpha-D-glucosamine contacts are provided by residues 9–12 (LAAG), Lys23, Gln73, and 78–79 (GT). Residue Asp103 coordinates Mg(2+). Residues Gly140, Glu155, Asn170, and Asn228 each contribute to the UDP-N-acetyl-alpha-D-glucosamine site. Asn228 contributes to the Mg(2+) binding site. The tract at residues 231 to 251 (IALAEASRLMQRRINENHMRN) is linker. An N-acetyltransferase region spans residues 252–457 (GVTLVNPENT…GYAKHLNHGK (206 aa)). Arg333 and Lys351 together coordinate UDP-N-acetyl-alpha-D-glucosamine. Residue His363 is the Proton acceptor of the active site. UDP-N-acetyl-alpha-D-glucosamine is bound by residues Tyr366 and Asn377. Acetyl-CoA contacts are provided by residues 386-387 (NY), Ala423, and Arg440.

It in the N-terminal section; belongs to the N-acetylglucosamine-1-phosphate uridyltransferase family. The protein in the C-terminal section; belongs to the transferase hexapeptide repeat family. In terms of assembly, homotrimer. The cofactor is Mg(2+).

It is found in the cytoplasm. It carries out the reaction alpha-D-glucosamine 1-phosphate + acetyl-CoA = N-acetyl-alpha-D-glucosamine 1-phosphate + CoA + H(+). The catalysed reaction is N-acetyl-alpha-D-glucosamine 1-phosphate + UTP + H(+) = UDP-N-acetyl-alpha-D-glucosamine + diphosphate. Its pathway is nucleotide-sugar biosynthesis; UDP-N-acetyl-alpha-D-glucosamine biosynthesis; N-acetyl-alpha-D-glucosamine 1-phosphate from alpha-D-glucosamine 6-phosphate (route II): step 2/2. The protein operates within nucleotide-sugar biosynthesis; UDP-N-acetyl-alpha-D-glucosamine biosynthesis; UDP-N-acetyl-alpha-D-glucosamine from N-acetyl-alpha-D-glucosamine 1-phosphate: step 1/1. It functions in the pathway bacterial outer membrane biogenesis; LPS lipid A biosynthesis. Catalyzes the last two sequential reactions in the de novo biosynthetic pathway for UDP-N-acetylglucosamine (UDP-GlcNAc). The C-terminal domain catalyzes the transfer of acetyl group from acetyl coenzyme A to glucosamine-1-phosphate (GlcN-1-P) to produce N-acetylglucosamine-1-phosphate (GlcNAc-1-P), which is converted into UDP-GlcNAc by the transfer of uridine 5-monophosphate (from uridine 5-triphosphate), a reaction catalyzed by the N-terminal domain. This is Bifunctional protein GlmU from Listeria monocytogenes serotype 4b (strain CLIP80459).